The primary structure comprises 243 residues: 3,4-dihydroxyphthalate decarboxylase (243 aa).

Glu-86 functions as the Proton donor/acceptor in the catalytic mechanism. A divalent metal cation-binding residues include Glu-86, His-105, His-107, and His-173.

It belongs to the aldolase class II family. A divalent metal cation serves as cofactor.

It catalyses the reaction 3,4-dihydroxyphthalate + H(+) = 3,4-dihydroxybenzoate + CO2. It participates in xenobiotic degradation; phthalate degradation. Catalyzes the decarboxylation of 3,4-dihydroxyphthalate to protocatechuate (3,4-dihydroxybenzoate) during phthalate metabolism. The protein is 3,4-dihydroxyphthalate decarboxylase of Rhodococcus jostii (strain RHA1).